A 304-amino-acid chain; its full sequence is Granaticin polyketide synthase bifunctional cyclase/dehydratase (304 aa).

It functions in the pathway antifungal biosynthesis; monensin biosynthesis. In terms of biological role, is needed for correct cyclization of the oligoketide leading to isochromanequinone formation. This Streptomyces virginiae (Streptomyces cinnamonensis) protein is Granaticin polyketide synthase bifunctional cyclase/dehydratase.